Here is a 359-residue protein sequence, read N- to C-terminus: Medium-wave-sensitive opsin 1 (359 aa).

Residues 1 to 47 (MAQQLTGEQTLDHYEDSTQASIFTYTNSNSTRGPFEGPNYHIAPRWV) are Extracellular-facing. The segment at 12 to 38 (DHYEDSTQASIFTYTNSNSTRGPFEGP) is required for 11-cis-retinal regeneration. A glycan (N-linked (GlcNAc...) asparagine) is linked at N29. A helical transmembrane segment spans residues 48–72 (YHLTSTWMILVVIASVFTNGLVLAA). Residues 73–84 (TMRFKKLRHPLN) are Cytoplasmic-facing. Residues 85 to 110 (WILVNLAVADLAETIIASTISVVNQI) form a helical membrane-spanning segment. Residues 111-124 (YGYFVLGHPLCVIE) are Extracellular-facing. The cysteines at positions 121 and 198 are disulfide-linked. The helical transmembrane segment at 125-144 (GYIVSLCGITGLWSLAIISW) threads the bilayer. At 145–163 (ERWLVVCKPFGNVRFDAKL) the chain is on the cytoplasmic side. The chain crosses the membrane as a helical span at residues 164–187 (ATVGIVFSWVWAAVWTAPPIFGWS). The Extracellular segment spans residues 188–213 (RYWPYGLKTSCGPDVFSGTSYPGVQS). Residues 214–241 (YMMVLMVTCCIFPLSIIVLCYLQVWLAI) traverse the membrane as a helical segment. Topologically, residues 242-263 (RAVAKQQKESESTQKAEKEVTR) are cytoplasmic. Residues 264 to 287 (MVVVMVFAYCLCWGPYTFFACFAT) form a helical membrane-spanning segment. Topologically, residues 288-295 (AHPGYAFH) are extracellular. The chain crosses the membrane as a helical span at residues 296–320 (PLVASLPSYFAKSATIYNPIIYVFM). An N6-(retinylidene)lysine modification is found at K307. Residues 321–359 (NRQFRNCILQLFGKKVDDSSELSSTSKTEVSSVSSVSPA) are Cytoplasmic-facing.

This sequence belongs to the G-protein coupled receptor 1 family. Opsin subfamily. In terms of assembly, monomer. Homodimer. Homotetramer. O-glycosylated. Post-translationally, phosphorylated on some or all of the serine and threonine residues present in the C-terminal region. Expressed in cone photoreceptor cells.

It is found in the membrane. In terms of biological role, visual pigments are the light-absorbing molecules that mediate vision. They consist of an apoprotein, opsin, covalently linked to cis-retinal. May increase spectral sensitivity in dim light. The chain is Medium-wave-sensitive opsin 1 (Opn1mw) from Rattus norvegicus (Rat).